A 288-amino-acid chain; its full sequence is Shikimate dehydrogenase (NADP(+)) (288 aa).

Shikimate contacts are provided by residues S15–S17 and T64. The active-site Proton acceptor is the K68. Residue E83 participates in NADP(+) binding. Residues N92 and D117 each contribute to the shikimate site. NADP(+) contacts are provided by residues G141–A145, N165–K170, and M232. Y234 is a shikimate binding site. Residue G254 participates in NADP(+) binding.

It belongs to the shikimate dehydrogenase family. As to quaternary structure, homodimer.

It catalyses the reaction shikimate + NADP(+) = 3-dehydroshikimate + NADPH + H(+). It functions in the pathway metabolic intermediate biosynthesis; chorismate biosynthesis; chorismate from D-erythrose 4-phosphate and phosphoenolpyruvate: step 4/7. Its function is as follows. Involved in the biosynthesis of the chorismate, which leads to the biosynthesis of aromatic amino acids. Catalyzes the reversible NADPH linked reduction of 3-dehydroshikimate (DHSA) to yield shikimate (SA). This Psychrobacter cryohalolentis (strain ATCC BAA-1226 / DSM 17306 / VKM B-2378 / K5) protein is Shikimate dehydrogenase (NADP(+)).